We begin with the raw amino-acid sequence, 875 residues long: Leucine--tRNA ligase (875 aa).

Residues 1–20 (MPSAGSVNAANPAVDTSAQT) show a composition bias toward polar residues. Positions 1 to 22 (MPSAGSVNAANPAVDTSAQTGR) are disordered. The 'HIGH' region motif lies at 60–70 (PYPSGSLHMGH). The 'KMSKS' region signature appears at 634–638 (KMSKS). An ATP-binding site is contributed by Lys637.

Belongs to the class-I aminoacyl-tRNA synthetase family.

It localises to the cytoplasm. It catalyses the reaction tRNA(Leu) + L-leucine + ATP = L-leucyl-tRNA(Leu) + AMP + diphosphate. This chain is Leucine--tRNA ligase, found in Synechococcus sp. (strain CC9605).